The primary structure comprises 232 residues: UPF0758 protein Clos_1766 (232 aa).

An MPN domain is found at 110-232 (KIKGPDDVSN…YFSMKEHKLI (123 aa)). Residues His-181, His-183, and Asp-194 each contribute to the Zn(2+) site. A JAMM motif motif is present at residues 181–194 (HNHPSGDPNPSGED).

Belongs to the UPF0758 family.

The polypeptide is UPF0758 protein Clos_1766 (Alkaliphilus oremlandii (strain OhILAs) (Clostridium oremlandii (strain OhILAs))).